A 360-amino-acid polypeptide reads, in one-letter code: Amine dehydrogenase (360 aa).

The protein belongs to the amine dehydrogenase family. In terms of assembly, homodimer.

It carries out the reaction a secondary alkyl amine + NAD(+) + H2O = a ketone + NH4(+) + NADH + H(+). The enzyme catalyses a secondary alkyl amine + NADP(+) + H2O = a ketone + NH4(+) + NADPH + H(+). It catalyses the reaction serinol + NAD(+) + H2O = dihydroxyacetone + NH4(+) + NADH + H(+). The catalysed reaction is serinol + NADP(+) + H2O = dihydroxyacetone + NH4(+) + NADPH + H(+). It carries out the reaction 2-aminopropan-1-ol + NAD(+) + H2O = hydroxyacetone + NH4(+) + NADH + H(+). The enzyme catalyses (R)-1-phenylethylamine + NAD(+) + H2O = acetophenone + NH4(+) + NADH + H(+). It catalyses the reaction (S)-1-phenylethylamine + NAD(+) + H2O = acetophenone + NH4(+) + NADH + H(+). The catalysed reaction is (2S)-2-aminobutan-1-ol + NAD(+) + H2O = 1-hydroxy-2-butanone + NH4(+) + NADH + H(+). It carries out the reaction (2S)-2-amino-3-methylbutan-1-ol + NAD(+) + H2O = 1-hydroxy-3-methylbutan-2-one + NH4(+) + NADH + H(+). The enzyme catalyses 2-aminopentan-1-ol + NAD(+) + H2O = 1-hydroxypentan-2-one + NH4(+) + NADH + H(+). It catalyses the reaction (S)-leucinol + NAD(+) + H2O = 1-hydroxy-4-methylpentan-2-one + NH4(+) + NADH + H(+). The catalysed reaction is (S)-isoleucinol + NAD(+) + H2O = (3S)-1-hydroxy-3-methylpentan-2-one + NH4(+) + NADH + H(+). It carries out the reaction (S)-methioninol + NAD(+) + H2O = 1-hydroxy-4-(methythio)butan-2-one + NH4(+) + NADH + H(+). The enzyme catalyses 2-aminocyclohexanol + NAD(+) + H2O = 2-hydroxycyclohexan-1-one + NH4(+) + NADH + H(+). It catalyses the reaction L-alanine + NAD(+) + H2O = pyruvate + NH4(+) + NADH + H(+). The catalysed reaction is D-alanine + NAD(+) + H2O = pyruvate + NH4(+) + NADH + H(+). It carries out the reaction L-aspartate + NAD(+) + H2O = oxaloacetate + NH4(+) + NADH + H(+). The enzyme catalyses D-aspartate + NAD(+) + H2O = oxaloacetate + NH4(+) + NADH + H(+). It catalyses the reaction L-glutamate + NAD(+) + H2O = 2-oxoglutarate + NH4(+) + NADH + H(+). The catalysed reaction is D-glutamate + NAD(+) + H2O = 2-oxoglutarate + NH4(+) + NADH + H(+). It carries out the reaction L-serine + NAD(+) + H2O = 3-hydroxypyruvate + NH4(+) + NADH + H(+). The enzyme catalyses D-serine + NAD(+) + H2O = 3-hydroxypyruvate + NH4(+) + NADH + H(+). It catalyses the reaction methylamine + NAD(+) + H2O = formaldehyde + NH4(+) + NADH + H(+). The catalysed reaction is ethylamine + NAD(+) + H2O = acetaldehyde + NH4(+) + NADH + H(+). It carries out the reaction propylamine + NAD(+) + H2O = propanal + NH4(+) + NADH + H(+). The enzyme catalyses butylamine + NAD(+) + H2O = butanal + NH4(+) + NADH + H(+). It catalyses the reaction hexylamine + NAD(+) + H2O = hexanal + NH4(+) + NADH + H(+). The catalysed reaction is octylamine + NAD(+) + H2O = octanal + NH4(+) + NADH + H(+). It carries out the reaction (R)-sec-butylamine + NAD(+) + H2O = butan-2-one + NH4(+) + NADH + H(+). The enzyme catalyses (S)-sec-butylamine + NAD(+) + H2O = butan-2-one + NH4(+) + NADH + H(+). It catalyses the reaction 2-aminopentane + NAD(+) + H2O = pentan-2-one + NH4(+) + NADH + H(+). The catalysed reaction is 3-aminopentane + NAD(+) + H2O = pentan-3-one + NH4(+) + NADH + H(+). It carries out the reaction (2R)-heptan-2-amine + NAD(+) + H2O = heptan-2-one + NH4(+) + NADH + H(+). The enzyme catalyses (2S)-heptan-2-amine + NAD(+) + H2O = heptan-2-one + NH4(+) + NADH + H(+). It catalyses the reaction benzylamine + NAD(+) + H2O = benzaldehyde + NH4(+) + NADH + H(+). The catalysed reaction is 3-aminobutan-2-ol + NAD(+) + H2O = acetoin + NH4(+) + NADH + H(+). It carries out the reaction 3-aminobutan-1-ol + NAD(+) + H2O = 4-hydroxybutan-2-one + NH4(+) + NADH + H(+). The enzyme catalyses 5-hydroxypentan-2-amine + NAD(+) + H2O = 5-hydroxypentan-2-one + NH4(+) + NADH + H(+). It catalyses the reaction 4-hydroxyhexan-3-amine + NAD(+) + H2O = 4-hydroxyhexan-3-one + NH4(+) + NADH + H(+). The catalysed reaction is 5-hydroxyoctan-4-amine + NAD(+) + H2O = 5-hydroxyoctan-4-one + NH4(+) + NADH + H(+). It carries out the reaction 2-hydroxy-1-phenylethan-1-amine + NAD(+) + H2O = 2-hydroxyacetophenone + NH4(+) + NADH + H(+). The enzyme catalyses hexan-2-amine + NAD(+) + H2O = hexan-2-one + NH4(+) + NADH + H(+). It catalyses the reaction 4-phenylbutan-2-amine + NAD(+) + H2O = 4-phenylbutan-2-one + NH4(+) + NADH + H(+). Functionally, catalyzes the reversible oxidative deaminations of a broad range of amines, amino alcohols and amino acids. Catalyzes the reversible dehydrogenation of serinol in the presence of NAD(+) to give dihydroxyacetone, ammonium ion and NADH, while NADP(+) shows a slight activity. Is also able to produce 2-amino-1-propanol and aspartate by the reductive amination of the corresponding keto alcohol (hydroxyacetone) and keto acid (oxaloacetate) in the presence of ammonium ions and NADH, and that of acetophenone from phenylethylamine by the oxidative deamination in the presence of NAD(+). The sequence is that of Amine dehydrogenase from Streptomyces virginiae (Streptomyces cinnamonensis).